Consider the following 462-residue polypeptide: Ammonium transporter Rh type B (462 aa).

At 1 to 11 (MTDPSTNMRLK) the chain is on the cytoplasmic side. A helical transmembrane segment spans residues 12–32 (LPITCFILQIILIILFGVLVQ). At 33 to 62 (YDEDTDAKKHHHGNHSESKSDIENDFYYRY) the chain is on the extracellular side. Asn46 carries N-linked (GlcNAc...) asparagine glycosylation. A helical transmembrane segment spans residues 63–83 (PSFQDVHVMIFVGFGFLMTFL). Residues 84-94 (QRYGFSSVGFN) lie on the Cytoplasmic side of the membrane. The helical transmembrane segment at 95–115 (FLIAAFSLQWATLMQGFFHGL) threads the bilayer. The Extracellular portion of the chain corresponds to 116-125 (HEGKIHIGVE). Residues 126–146 (SMINADFCTGSVLISFGAVLG) traverse the membrane as a helical segment. Residues 147–152 (KTSPVQ) lie on the Cytoplasmic side of the membrane. Residues 153–173 (LLFMAVFEVTLFAVNEFILLT) traverse the membrane as a helical segment. Over 174-180 (LLGTKDA) the chain is Extracellular. The helical transmembrane segment at 181–201 (GGSMTIHTFGAYFGLMVTRIL) threads the bilayer. Residues 202–220 (YRPNLDKSKHKNCSVYHSD) are Cytoplasmic-facing. The helical transmembrane segment at 221–241 (LFAMIGTLYLWMFWPSFNSAV) threads the bilayer. The Extracellular segment spans residues 242–302 (TEHGDPQHRT…VAAGTAGEMM (61 aa)). Residues 303–323 (LTPFGSMIVGFLAGIISVLGF) form a helical membrane-spanning segment. The Cytoplasmic segment spans residues 324 to 344 (KYLTPILENKLKIQDTCGIHN). A helical membrane pass occupies residues 345-365 (LHGMPGVLGAIVGAVTASLAS). Residues 366 to 395 (KEVYGEGLEKVFPDVASGKRTASDQGGVQA) lie on the Extracellular side of the membrane. A helical membrane pass occupies residues 396-416 (ISLAVTLGMALFGGLIVGFIL). Residues 417–462 (KLPIFGAPRDTTCFEDSLYWEVPGEEESHEDQLTTVKTEESDKLNS) lie on the Cytoplasmic side of the membrane. The disordered stretch occupies residues 441–462 (EEESHEDQLTTVKTEESDKLNS). Over residues 453–462 (KTEESDKLNS) the composition is skewed to basic and acidic residues.

This sequence belongs to the ammonium transporter (TC 2.A.49) family. Rh subfamily.

It localises to the basolateral cell membrane. The protein localises to the cytoplasmic vesicle membrane. In terms of biological role, functions as an ammonia transporter. May play a role in the elimination of ammonia in the gill. The polypeptide is Ammonium transporter Rh type B (rhbg) (Oryzias latipes (Japanese rice fish)).